Consider the following 753-residue polypeptide: Protein transport protein SEC23-1 (753 aa).

Zn(2+)-binding residues include Cys-56, Cys-61, Cys-80, and Cys-83.

The protein belongs to the SEC23/SEC24 family. SEC23 subfamily. The COPII coat is composed of at least 5 proteins: the SEC23/24 complex, the SEC13/31 complex, and the protein SAR1.

The protein resides in the cytoplasm. It is found in the cytoplasmic vesicle. Its subcellular location is the COPII-coated vesicle membrane. It localises to the endoplasmic reticulum membrane. The protein localises to the golgi apparatus membrane. Its function is as follows. Component of the coat protein complex II (COPII) which promotes the formation of transport vesicles from the endoplasmic reticulum (ER). The coat has two main functions, the physical deformation of the endoplasmic reticulum membrane into vesicles and the selection of cargo molecules. The polypeptide is Protein transport protein SEC23-1 (SEC231) (Candida glabrata (strain ATCC 2001 / BCRC 20586 / JCM 3761 / NBRC 0622 / NRRL Y-65 / CBS 138) (Yeast)).